Here is a 129-residue protein sequence, read N- to C-terminus: M-zodatoxin-Lt8g (129 aa).

A signal peptide spans 1–20 (MKYFVVALALVAAFACIAES). Positions 21 to 60 (KPAESEHELAEVEEENELADLEDAVWLEHLADLSDLEEAR) are excised as a propeptide. The Processing quadruplet motif motif lies at 57 to 60 (EEAR).

Post-translationally, cleavage of the propeptide depends on the processing quadruplet motif (XXXR, with at least one of X being E). Expressed by the venom gland.

Its subcellular location is the secreted. Functionally, insecticidal, cytolytic and antimicrobial peptide. Has insecticidal activity against the flesh fly S.carnaria. Has antibacterial activity against the Gram-negative bacteria E.coli. Forms voltage-dependent, ion-permeable channels in membranes. At high concentration causes cell membrane lysis. The sequence is that of M-zodatoxin-Lt8g (cit 1-8) from Lachesana tarabaevi (Spider).